Here is a 57-residue protein sequence, read N- to C-terminus: Protein YnaL (57 aa).

Positions 7–57 (LQIPVPEPIPGDPVPVPDPIPRPQPMPDPPPDEEPIKLSHRERRSARIRAC) are disordered. The segment covering 11-35 (VPEPIPGDPVPVPDPIPRPQPMPDP) has biased composition (pro residues). Residues 46-57 (HRERRSARIRAC) show a composition bias toward basic residues.

In Escherichia coli (strain K12), this protein is Protein YnaL.